The primary structure comprises 469 residues: Ribulose bisphosphate carboxylase large chain (469 aa).

An N6,N6,N6-trimethyllysine modification is found at K5. Substrate-binding residues include N114 and T164. K166 (proton acceptor) is an active-site residue. Residue K168 participates in substrate binding. The Mg(2+) site is built by K192, D194, and E195. An N6-carboxylysine modification is found at K192. H285 serves as the catalytic Proton acceptor. 3 residues coordinate substrate: R286, H318, and S370.

The protein belongs to the RuBisCO large chain family. Type I subfamily. In terms of assembly, heterohexadecamer of 8 large chains and 8 small chains; disulfide-linked. The disulfide link is formed within the large subunit homodimers. Mg(2+) serves as cofactor. In terms of processing, the disulfide bond which can form in the large chain dimeric partners within the hexadecamer appears to be associated with oxidative stress and protein turnover.

The protein localises to the plastid. It is found in the chloroplast. The enzyme catalyses 2 (2R)-3-phosphoglycerate + 2 H(+) = D-ribulose 1,5-bisphosphate + CO2 + H2O. The catalysed reaction is D-ribulose 1,5-bisphosphate + O2 = 2-phosphoglycolate + (2R)-3-phosphoglycerate + 2 H(+). Its function is as follows. RuBisCO catalyzes two reactions: the carboxylation of D-ribulose 1,5-bisphosphate, the primary event in carbon dioxide fixation, as well as the oxidative fragmentation of the pentose substrate in the photorespiration process. Both reactions occur simultaneously and in competition at the same active site. In Fleroya rubrostipulata (Mitragyna rubrostipulata), this protein is Ribulose bisphosphate carboxylase large chain.